Reading from the N-terminus, the 107-residue chain is DNA polymerase delta subunit 4 (107 aa).

The short motif at 1-16 is the PCNA-interaction protein motif (PIP box) element; the sequence is MGRKRFITDSYPVVKK. A disordered region spans residues 1–40; the sequence is MGRKRFITDSYPVVKKREGPPGHSKGELAPELGEDTQSLS. Basic and acidic residues predominate over residues 15 to 28; the sequence is KKREGPPGHSKGEL.

Belongs to the DNA polymerase delta subunit 4 family. As to quaternary structure, component of the tetrameric DNA polymerase delta complex (Pol-delta4), which consists of POLD1/p125, POLD2/p50, POLD3/p66/p68 and POLD4/p12, with POLD1 bearing DNA polymerase and 3' to 5' proofreading exonuclease activities. Within this complex, directly interacts with POLD1 and POLD2. Directly interacts with PCNA, as do POLD1 and POLD3; this interaction stimulates Pol-delta4 polymerase activity. As POLD1 and POLD2, directly interacts with WRNIP1; this interaction stimulates DNA polymerase delta-mediated DNA synthesis, independently of the presence of PCNA, possibly by increasing initiation frequency. Upon genotoxic stress induced by DNA damaging agents or by replication stress, POLD4 is proteolytically degraded and Pol-delta4 is converted into a trimeric form of the complex (Pol-delta3) that has an increased proofreading activity. The DNA polymerase delta complex interacts with POLDIP2; this interaction is probably mediated through direct binding to POLD2. Post-translationally, ubiquitinated; undergoes 'Lys-48'-linked polyubiquitination in response to UV irradiation or treatment with an alkylating agent, leading to proteasomal degradation. This modification is mediated, at least in part, by RNF8. In terms of processing, ubiquitinated; undergoes 'Lys-48'-linked ubiquitination in response to UV irradiation, leading to proteasomal degradation. This modification is partly mediated by RNF8 and by the DCX(DTL) E3 ubiquitin ligase complex (also called CRL4(CDT2)). Efficient degradation requires the presence of PCNA and is required for the inhibition of fork progression after DNA damage.

It is found in the nucleus. Functionally, as a component of the tetrameric DNA polymerase delta complex (Pol-delta4), plays a role in high fidelity genome replication and repair. Within this complex, increases the rate of DNA synthesis and decreases fidelity by regulating POLD1 polymerase and proofreading 3' to 5' exonuclease activity. Pol-delta4 participates in Okazaki fragment processing, through both the short flap pathway, as well as a nick translation system. Under conditions of DNA replication stress, required for the repair of broken replication forks through break-induced replication (BIR), a mechanism that may induce segmental genomic duplications of up to 200 kb. Involved in Pol-delta4 translesion synthesis (TLS) of templates carrying O6-methylguanine or abasic sites. Its degradation in response to DNA damage is required for the inhibition of fork progression and cell survival. The chain is DNA polymerase delta subunit 4 (Pold4) from Mus musculus (Mouse).